Reading from the N-terminus, the 232-residue chain is Mitochondrial import inner membrane translocase subunit Tim21 (232 aa).

A mitochondrion-targeting transit peptide spans methionine 1–leucine 31. The chain crosses the membrane as a helical span at residues phenylalanine 96–valine 116.

The protein belongs to the TIM21 family.

The protein resides in the mitochondrion membrane. May participate in the translocation of transit peptide-containing proteins across the mitochondrial inner membrane. This Xenopus laevis (African clawed frog) protein is Mitochondrial import inner membrane translocase subunit Tim21 (timm21).